The primary structure comprises 360 residues: Geranylgeranyl pyrophosphate synthase 9, chloroplastic (360 aa).

The transit peptide at 1-39 (MATTVHLSSSSLFSQSRGRRDNSISSVKSLRKRTVLSLS) directs the protein to the chloroplast. Positions 106, 109, and 138 each coordinate isopentenyl diphosphate. Residues Asp145 and Asp151 each contribute to the Mg(2+) site. Arg156 contributes to the dimethylallyl diphosphate binding site. Arg157 is a binding site for isopentenyl diphosphate. Dimethylallyl diphosphate-binding residues include Lys245, Thr246, Gln283, Lys300, and Lys310.

Belongs to the FPP/GGPP synthase family. Monomer. No interactions with GGR. Mg(2+) serves as cofactor.

The protein localises to the plastid. The protein resides in the chloroplast. It carries out the reaction isopentenyl diphosphate + dimethylallyl diphosphate = (2E)-geranyl diphosphate + diphosphate. The catalysed reaction is isopentenyl diphosphate + (2E)-geranyl diphosphate = (2E,6E)-farnesyl diphosphate + diphosphate. It catalyses the reaction isopentenyl diphosphate + (2E,6E)-farnesyl diphosphate = (2E,6E,10E)-geranylgeranyl diphosphate + diphosphate. It participates in isoprenoid biosynthesis; farnesyl diphosphate biosynthesis; farnesyl diphosphate from geranyl diphosphate and isopentenyl diphosphate: step 1/1. Its pathway is isoprenoid biosynthesis; geranyl diphosphate biosynthesis; geranyl diphosphate from dimethylallyl diphosphate and isopentenyl diphosphate: step 1/1. The protein operates within isoprenoid biosynthesis; geranylgeranyl diphosphate biosynthesis; geranylgeranyl diphosphate from farnesyl diphosphate and isopentenyl diphosphate: step 1/1. In terms of biological role, catalyzes the trans-addition of the three molecules of IPP onto DMAPP to form geranylgeranyl pyrophosphate. The protein is Geranylgeranyl pyrophosphate synthase 9, chloroplastic (GGPPS9) of Arabidopsis thaliana (Mouse-ear cress).